A 279-amino-acid chain; its full sequence is 4-hydroxy-3-methylbut-2-enyl diphosphate reductase (279 aa).

Residue cysteine 12 coordinates [4Fe-4S] cluster. 2 residues coordinate (2E)-4-hydroxy-3-methylbut-2-enyl diphosphate: histidine 40 and histidine 72. Residues histidine 40 and histidine 72 each contribute to the dimethylallyl diphosphate site. Residues histidine 40 and histidine 72 each contribute to the isopentenyl diphosphate site. Residue cysteine 94 coordinates [4Fe-4S] cluster. Histidine 122 contributes to the (2E)-4-hydroxy-3-methylbut-2-enyl diphosphate binding site. Position 122 (histidine 122) interacts with dimethylallyl diphosphate. Histidine 122 is an isopentenyl diphosphate binding site. Glutamate 124 serves as the catalytic Proton donor. Threonine 161 is a binding site for (2E)-4-hydroxy-3-methylbut-2-enyl diphosphate. Cysteine 189 serves as a coordination point for [4Fe-4S] cluster. (2E)-4-hydroxy-3-methylbut-2-enyl diphosphate-binding residues include serine 217, asparagine 219, and serine 261. Positions 217, 219, and 261 each coordinate dimethylallyl diphosphate. Isopentenyl diphosphate-binding residues include serine 217, asparagine 219, and serine 261.

It belongs to the IspH family. [4Fe-4S] cluster serves as cofactor.

The catalysed reaction is isopentenyl diphosphate + 2 oxidized [2Fe-2S]-[ferredoxin] + H2O = (2E)-4-hydroxy-3-methylbut-2-enyl diphosphate + 2 reduced [2Fe-2S]-[ferredoxin] + 2 H(+). The enzyme catalyses dimethylallyl diphosphate + 2 oxidized [2Fe-2S]-[ferredoxin] + H2O = (2E)-4-hydroxy-3-methylbut-2-enyl diphosphate + 2 reduced [2Fe-2S]-[ferredoxin] + 2 H(+). The protein operates within isoprenoid biosynthesis; dimethylallyl diphosphate biosynthesis; dimethylallyl diphosphate from (2E)-4-hydroxy-3-methylbutenyl diphosphate: step 1/1. It participates in isoprenoid biosynthesis; isopentenyl diphosphate biosynthesis via DXP pathway; isopentenyl diphosphate from 1-deoxy-D-xylulose 5-phosphate: step 6/6. Functionally, catalyzes the conversion of 1-hydroxy-2-methyl-2-(E)-butenyl 4-diphosphate (HMBPP) into a mixture of isopentenyl diphosphate (IPP) and dimethylallyl diphosphate (DMAPP). Acts in the terminal step of the DOXP/MEP pathway for isoprenoid precursor biosynthesis. This chain is 4-hydroxy-3-methylbut-2-enyl diphosphate reductase, found in Syntrophotalea carbinolica (strain DSM 2380 / NBRC 103641 / GraBd1) (Pelobacter carbinolicus).